Here is a 616-residue protein sequence, read N- to C-terminus: Chaperone protein HscA homolog (616 aa).

The protein belongs to the heat shock protein 70 family.

Its function is as follows. Chaperone involved in the maturation of iron-sulfur cluster-containing proteins. Has a low intrinsic ATPase activity which is markedly stimulated by HscB. This chain is Chaperone protein HscA homolog, found in Aliivibrio fischeri (strain ATCC 700601 / ES114) (Vibrio fischeri).